The following is a 355-amino-acid chain: Uroporphyrinogen decarboxylase (355 aa).

Substrate-binding positions include Arg-36–Arg-40, Asp-85, Tyr-160, Ser-215, and His-334.

It belongs to the uroporphyrinogen decarboxylase family. Homodimer.

Its subcellular location is the cytoplasm. The enzyme catalyses uroporphyrinogen III + 4 H(+) = coproporphyrinogen III + 4 CO2. The protein operates within porphyrin-containing compound metabolism; protoporphyrin-IX biosynthesis; coproporphyrinogen-III from 5-aminolevulinate: step 4/4. In terms of biological role, catalyzes the decarboxylation of four acetate groups of uroporphyrinogen-III to yield coproporphyrinogen-III. The polypeptide is Uroporphyrinogen decarboxylase (Rhodococcus opacus (strain B4)).